The chain runs to 90 residues: Large ribosomal subunit protein uL23c (90 aa).

Belongs to the universal ribosomal protein uL23 family. In terms of assembly, part of the 50S ribosomal subunit.

The protein resides in the plastid. Its subcellular location is the chloroplast. In terms of biological role, binds to 23S rRNA. The chain is Large ribosomal subunit protein uL23c (rpl23) from Psilotum nudum (Whisk fern).